Here is a 320-residue protein sequence, read N- to C-terminus: MTNIRVAIVGYGNLGRSVEKLIAKQPDMDLVGIFSRRATLDTKTPVFDVADVDKHADDVDVLFLCMGSATDIPEQAPKFAQFACTVDTYDNHRDIPRHRQVMNEAATAAGNVALVSTGWDPGMFSINRVYAAAVLAEHQQHTFWGPGLSQGHSDALRRIPGVQKAVQYTLPSEDALEKARRGEAGDLTGKQTHKRQCFVVADAADHERIENDIRTMPDYFVGYEVEVNFIDEATFDSEHTGMPHGGHVITTGDTGGFNHTVEYILKLDRNPDFTASSQIAFGRAAHRMKQQGQSGAFTVLEVAPYLLSPENLDDLIARDV.

NADP(+) contacts are provided by residues 11–14, 35–37, 65–68, 88–90, and 117–121; these read YGNL, SRR, CMGS, TYD, and TGWDP. Residues D90, D120, W144, 150–151, T169, R195, H244, and N270 each bind substrate; that span reads QG.

As to quaternary structure, homodimer.

The enzyme catalyses meso-2,6-diaminopimelate + NADP(+) + H2O = (S)-2-amino-6-oxoheptanedioate + NH4(+) + NADPH + H(+). It participates in amino-acid biosynthesis; L-lysine biosynthesis via DAP pathway; DL-2,6-diaminopimelate from (S)-tetrahydrodipicolinate: step 1/1. L,L-2,6-diaminopimelate and D,D-2,6-diaminopimelate competitively inhibit the oxidative deamination of meso-2,6-diaminopimelate. The enzyme is also inhibited by L-cysteine, and by p-chloromercuribenzoate, iodoacetic acid and HgCl(2) in vitro. Functionally, catalyzes the reversible NADPH-dependent reductive amination of L-2-amino-6-oxopimelate, the acyclic form of L-tetrahydrodipicolinate, to generate the meso compound, D,L-2,6-diaminopimelate. Probably plays a role in lysine biosynthesis. Exhibits a high substrate specificity for meso-2,6-diaminopimelate, since L,L-2,6-diaminopimelate, D,D-2,6-diaminopimelate, L-glutamate, L-alanine, L-leucine, L-valine, L-aspartate, L-threonine, L-homoserine, L-methionine, L-lysine, L-serine, L-phenylalanine, L-tyrosine, L-tryptophan, L-ornithine, L-histidine, L-arginine, D-glutamate, and D-alanine are not substrates for the oxidative deamination reaction. Can use NAD(+) only poorly since the activity observed in the presence of NAD(+) is about 3% of that with NADP(+). The protein is Meso-diaminopimelate D-dehydrogenase (ddh) of Corynebacterium glutamicum (strain ATCC 13032 / DSM 20300 / JCM 1318 / BCRC 11384 / CCUG 27702 / LMG 3730 / NBRC 12168 / NCIMB 10025 / NRRL B-2784 / 534).